The chain runs to 358 residues: Phosphoserine aminotransferase (358 aa).

Residue Arg41 coordinates L-glutamate. Pyridoxal 5'-phosphate-binding positions include 75 to 76, Trp100, Thr148, Asp167, and Gln190; that span reads AS. Lys191 carries the N6-(pyridoxal phosphate)lysine modification. Pyridoxal 5'-phosphate is bound at residue 233-234; that stretch reads NT.

The protein belongs to the class-V pyridoxal-phosphate-dependent aminotransferase family. SerC subfamily. Homodimer. The cofactor is pyridoxal 5'-phosphate.

The protein localises to the cytoplasm. The catalysed reaction is O-phospho-L-serine + 2-oxoglutarate = 3-phosphooxypyruvate + L-glutamate. It carries out the reaction 4-(phosphooxy)-L-threonine + 2-oxoglutarate = (R)-3-hydroxy-2-oxo-4-phosphooxybutanoate + L-glutamate. It functions in the pathway amino-acid biosynthesis; L-serine biosynthesis; L-serine from 3-phospho-D-glycerate: step 2/3. It participates in cofactor biosynthesis; pyridoxine 5'-phosphate biosynthesis; pyridoxine 5'-phosphate from D-erythrose 4-phosphate: step 3/5. Its function is as follows. Catalyzes the reversible conversion of 3-phosphohydroxypyruvate to phosphoserine and of 3-hydroxy-2-oxo-4-phosphonooxybutanoate to phosphohydroxythreonine. This is Phosphoserine aminotransferase from Campylobacter jejuni (strain RM1221).